A 163-amino-acid polypeptide reads, in one-letter code: Acetolactate synthase small subunit (163 aa).

In terms of domain architecture, ACT spans 4-79 (ILSVLLENES…VFKVVNLSEQ (76 aa)).

Belongs to the acetolactate synthase small subunit family. As to quaternary structure, dimer of large and small chains.

It carries out the reaction 2 pyruvate + H(+) = (2S)-2-acetolactate + CO2. Its pathway is amino-acid biosynthesis; L-isoleucine biosynthesis; L-isoleucine from 2-oxobutanoate: step 1/4. It participates in amino-acid biosynthesis; L-valine biosynthesis; L-valine from pyruvate: step 1/4. The chain is Acetolactate synthase small subunit (ilvH) from Haemophilus influenzae (strain ATCC 51907 / DSM 11121 / KW20 / Rd).